We begin with the raw amino-acid sequence, 387 residues long: S-adenosylmethionine synthase (387 aa).

Histidine 15 contacts ATP. Aspartate 17 is a binding site for Mg(2+). Glutamate 43 contacts K(+). L-methionine contacts are provided by glutamate 56 and glutamine 99. The segment at 99–109 (QSPDIAQGVNR) is flexible loop. Residues 166-168 (DAK), 232-233 (RF), aspartate 241, 247-248 (RK), alanine 264, and lysine 268 contribute to the ATP site. Aspartate 241 provides a ligand contact to L-methionine. L-methionine is bound at residue lysine 272.

Belongs to the AdoMet synthase family. Homotetramer; dimer of dimers. Mg(2+) is required as a cofactor. K(+) serves as cofactor.

It is found in the cytoplasm. The catalysed reaction is L-methionine + ATP + H2O = S-adenosyl-L-methionine + phosphate + diphosphate. The protein operates within amino-acid biosynthesis; S-adenosyl-L-methionine biosynthesis; S-adenosyl-L-methionine from L-methionine: step 1/1. Its function is as follows. Catalyzes the formation of S-adenosylmethionine (AdoMet) from methionine and ATP. The overall synthetic reaction is composed of two sequential steps, AdoMet formation and the subsequent tripolyphosphate hydrolysis which occurs prior to release of AdoMet from the enzyme. This is S-adenosylmethionine synthase from Nitrosomonas europaea (strain ATCC 19718 / CIP 103999 / KCTC 2705 / NBRC 14298).